A 420-amino-acid chain; its full sequence is Tryptophan synthase beta chain (420 aa).

Lysine 99 is subject to N6-(pyridoxal phosphate)lysine.

This sequence belongs to the TrpB family. Tetramer of two alpha and two beta chains. It depends on pyridoxal 5'-phosphate as a cofactor.

It catalyses the reaction (1S,2R)-1-C-(indol-3-yl)glycerol 3-phosphate + L-serine = D-glyceraldehyde 3-phosphate + L-tryptophan + H2O. It functions in the pathway amino-acid biosynthesis; L-tryptophan biosynthesis; L-tryptophan from chorismate: step 5/5. Functionally, the beta subunit is responsible for the synthesis of L-tryptophan from indole and L-serine. The polypeptide is Tryptophan synthase beta chain (Helicobacter hepaticus (strain ATCC 51449 / 3B1)).